Consider the following 91-residue polypeptide: uncharacterized protein (91 aa).

Residues 1 to 21 (MKQLLASPSLQLVTYPASATA) form the signal peptide.

This sequence belongs to the BhsA/McbA family.

The protein localises to the periplasm. This is an uncharacterized protein from Escherichia coli O157:H7.